Consider the following 407-residue polypeptide: S-adenosylmethionine synthase (407 aa).

H19 is an ATP binding site. D21 is a Mg(2+) binding site. E47 lines the K(+) pocket. Residues E60 and Q103 each coordinate L-methionine. Residues 103 to 113 are flexible loop; it reads QSQEIADGVDN. Positions 107–134 are disordered; sequence IADGVDNSDEARTNGDVEEDDRAGAGDQ. ATP-binding positions include 178-180, D258, 264-265, A281, and K285; these read DGK and RK. Residue D258 coordinates L-methionine. Residue K289 participates in L-methionine binding.

The protein belongs to the AdoMet synthase family. As to quaternary structure, homotetramer; dimer of dimers. Mg(2+) is required as a cofactor. The cofactor is K(+).

The protein localises to the cytoplasm. It carries out the reaction L-methionine + ATP + H2O = S-adenosyl-L-methionine + phosphate + diphosphate. It participates in amino-acid biosynthesis; S-adenosyl-L-methionine biosynthesis; S-adenosyl-L-methionine from L-methionine: step 1/1. In terms of biological role, catalyzes the formation of S-adenosylmethionine (AdoMet) from methionine and ATP. The overall synthetic reaction is composed of two sequential steps, AdoMet formation and the subsequent tripolyphosphate hydrolysis which occurs prior to release of AdoMet from the enzyme. This Corynebacterium glutamicum (strain ATCC 13032 / DSM 20300 / JCM 1318 / BCRC 11384 / CCUG 27702 / LMG 3730 / NBRC 12168 / NCIMB 10025 / NRRL B-2784 / 534) protein is S-adenosylmethionine synthase.